The sequence spans 459 residues: uncharacterized protein (459 aa).

In terms of domain architecture, TRAM spans 6-64 (KNKQEKNIIITIKRLGINGEGIGYYKKKIIFIPGALPNEVVVAKIVDRHPHYLEGELVR). 4 residues coordinate S-adenosyl-L-methionine: glutamine 289, tyrosine 318, glutamate 339, and aspartate 387. The active-site Nucleophile is cysteine 414.

It belongs to the class I-like SAM-binding methyltransferase superfamily. RNA M5U methyltransferase family.

This is an uncharacterized protein from Lactobacillus johnsonii (strain CNCM I-12250 / La1 / NCC 533).